The following is a 241-amino-acid chain: Carboxy-S-adenosyl-L-methionine synthase (241 aa).

Residues Y38, 63-65, 88-89, 116-117, N131, and R198 each bind S-adenosyl-L-methionine; these read GCS, DN, and DI.

Belongs to the class I-like SAM-binding methyltransferase superfamily. Cx-SAM synthase family. As to quaternary structure, homodimer.

The enzyme catalyses prephenate + S-adenosyl-L-methionine = carboxy-S-adenosyl-L-methionine + 3-phenylpyruvate + H2O. Catalyzes the conversion of S-adenosyl-L-methionine (SAM) to carboxy-S-adenosyl-L-methionine (Cx-SAM). In Histophilus somni (strain 2336) (Haemophilus somnus), this protein is Carboxy-S-adenosyl-L-methionine synthase.